Here is a 215-residue protein sequence, read N- to C-terminus: Rho-related GTP-binding protein RhoF (215 aa).

An N-acetylmethionine modification is found at Met-1. Gly-30–Thr-37 is a GTP binding site. The Effector region motif lies at Tyr-52–Tyr-60. Residues Asp-77–Gln-81 and Cys-135–Asp-138 contribute to the GTP site. Cysteine methyl ester is present on Cys-212. The S-geranylgeranyl cysteine moiety is linked to residue Cys-212. A propeptide spans Leu-213–Leu-215 (removed in mature form).

Belongs to the small GTPase superfamily. Rho family.

The protein resides in the cell membrane. Its subcellular location is the cytoplasm. It is found in the cytoskeleton. Its function is as follows. Plasma membrane-associated small GTPase which cycles between an active GTP-bound and an inactive GDP-bound state. Causes the formation of thin, actin-rich surface projections called filopodia. Functions cooperatively with CDC42 and Rac to generate additional structures, increasing the diversity of actin-based morphology. This is Rho-related GTP-binding protein RhoF (RHOF) from Bos taurus (Bovine).